We begin with the raw amino-acid sequence, 283 residues long: Non-selective voltage-gated ion channel VDAC3 (283 aa).

Cys2 is modified (N-acetylcysteine). Phosphothreonine is present on Thr4. Residues Lys12, Lys15, and Lys20 each carry the N6-acetyllysine modification. Beta stranded transmembrane passes span 26–35 and 39–47; these read MVKIDLKTKS and VEFSTSGHA. Glycyl lysine isopeptide (Lys-Gly) (interchain with G-Cter in ubiquitin) cross-links involve residues Lys53 and Lys61. The next 3 beta stranded transmembrane spans lie at 54–64, 69–76, and 80–89; these read ASGNLETKYKV, LTFTQKWN, and TLGTEISWEN. Lys90 is subject to N6-acetyllysine. Residues 95 to 104 traverse the membrane as a beta stranded segment; it reads LKLTLDTIFV. Residues Lys109 and Lys110 each participate in a glycyl lysine isopeptide (Lys-Gly) (interchain with G-Cter in ubiquitin) cross-link. A run of 10 beta stranded transmembrane segments spans residues 111–120, 123–130, 137–145, 150–158, 163–175, 178–185, 189–198, 202–211, 218–227, and 231–238; these read SGKLKASYKR, FSVGSNVD, TIYGWAVLA, LAGYQMSFD, KLSQ…GYKA, FQLHTHVN, EFGGSIYQKV, IETSINLAWT, RFGIAAKYML, and TSLSAKVN. Residue Lys163 forms a Glycyl lysine isopeptide (Lys-Gly) (interchain with G-Cter in ubiquitin) linkage. Ser241 carries the phosphoserine modification. Residues 242 to 244 and 260 to 264 each bind NAD(+); these read LIG and SALID. Beta stranded transmembrane passes span 242–251 and 254–263; these read LIGLGYTQTL and GVKLTLSALI. Lys266 bears the N6-acetyllysine; alternate mark. Lys266 participates in a covalent cross-link: Glycyl lysine isopeptide (Lys-Gly) (interchain with G-Cter in ubiquitin); alternate. A beta stranded transmembrane segment spans residues 273–282; the sequence is HKVGLGFELE. Lys274 is covalently cross-linked (Glycyl lysine isopeptide (Lys-Gly) (interchain with G-Cter in ubiquitin)).

This sequence belongs to the eukaryotic mitochondrial porin family. In terms of assembly, interacts with ARMC12 in a TBC1D21-dependent manner. Interacts with MISFA. In terms of processing, ubiquitinated by PRKN during mitophagy, leading to its degradation and enhancement of mitophagy. Deubiquitinated by USP30. In terms of tissue distribution, expressed in erythrocytes (at protein level). Widely expressed. Highest in testis.

The protein resides in the mitochondrion outer membrane. It is found in the membrane. The catalysed reaction is chloride(in) = chloride(out). It catalyses the reaction K(+)(in) = K(+)(out). Its function is as follows. Non-selective voltage-gated ion channel that mediates the transport of anions and cations through the mitochondrion outer membrane and plasma membrane. Forms a high-conducting channel with a stable open state and a voltage-induced closure with a mild preference for anions over cations. Involved in male fertility and sperm mitochondrial sheath formation. This chain is Non-selective voltage-gated ion channel VDAC3, found in Homo sapiens (Human).